The sequence spans 439 residues: DNA 3'-5' translocase XPB2 (439 aa).

Residues 1-54 (MVYLRYFKGLILSDAYAPGLKWSDELKAYSALAFKYRDVRKYFLEKEIEVEENV) are DRD domain. Residues 77 to 221 (VKAWLKEKRG…LYPILVGPIV (145 aa)) enclose the Helicase ATP-binding domain. ATP is bound by residues 90 to 97 (LPTGAGKT) and Arg-127. The DEAH box signature appears at 174–177 (DEVH). Residues 205-207 (RDD) carry the RED motif motif. The tract at residues 227-234 (EELAGKYI) is flexible hinge region. The thM region stretch occupies residues 248–307 (NEEKKRYDGLRKKLKDFLSSRGLKLQNLDDFHRLVKLAAKDKEAREALLAWHESLNIAVN). Residues 311-439 (KIEKLREILQ…DYRLSRRRRE (129 aa)) form the Helicase C-terminal domain.

Belongs to the helicase family. RAD25/XPB subfamily. In terms of assembly, forms a heterodimer with Bax1.

It catalyses the reaction Couples ATP hydrolysis with the unwinding of duplex DNA by translocating in the 3'-5' direction.. The catalysed reaction is ATP + H2O = ADP + phosphate + H(+). In terms of biological role, ATP-dependent DNA translocase which moves along double-stranded DNA (dsDNA) in a 3'-5' direction, unwinding the DNA. The ThM domain grips the resulting 3'-ssDNA tail and functions as a wedge (particularly Phe-278), breaking dsDNA base pairs, probably using the energy from ATP hydrolysis to move along dsDNA. A DNA-dependent ATPase; double-stranded DNA (dsDNA) stimulates the activity more than single-stranded DNA (ssDNA), while Bax1 stimulates ATPase more. In an in vitro assay had no detectable helicase activity. Binds ssDNA better than dsDNA. Has very low ATPase activity that is stimulated by Bax1; dsDNA, Y-form DNA and a DNA substrate with a 6 base pair (bp) bubble in the center stimulate the XPB2-Bax1 ATPase activity about 10- 20-fold more than the absence of DNA. In an XPB2-Bax1-bubble DNA crystal (12 bp of dsDNA, a 6 base bubble and 6 bp of dsDNA) the short 6 bp arm is unwound. The 2 helicase and the ThM domains of XPB2 with the NTD and CRD domains of Bax1 encircle the DNA, forming a tunnel where the 12 bp dsDNA and the ds-ssDNA junction are located. The ThM domain is wedged between the ssDNA tails, with the 5' ssDNA contacting Bax1 and the 3' ssDNA in a channel in XPB2. Bax1 increases the affinity of XPB2 for forked DNA. This Sulfurisphaera tokodaii (strain DSM 16993 / JCM 10545 / NBRC 100140 / 7) (Sulfolobus tokodaii) protein is DNA 3'-5' translocase XPB2.